Reading from the N-terminus, the 396-residue chain is Tryptophan synthase beta chain (396 aa).

At lysine 88 the chain carries N6-(pyridoxal phosphate)lysine.

It belongs to the TrpB family. Tetramer of two alpha and two beta chains. Pyridoxal 5'-phosphate serves as cofactor.

It catalyses the reaction (1S,2R)-1-C-(indol-3-yl)glycerol 3-phosphate + L-serine = D-glyceraldehyde 3-phosphate + L-tryptophan + H2O. It participates in amino-acid biosynthesis; L-tryptophan biosynthesis; L-tryptophan from chorismate: step 5/5. Functionally, the beta subunit is responsible for the synthesis of L-tryptophan from indole and L-serine. This is Tryptophan synthase beta chain from Shewanella baltica (strain OS195).